The primary structure comprises 176 residues: Large ribosomal subunit protein uL6 (176 aa).

Positions 151–170 are enriched in basic and acidic residues; the sequence is RPPEPYKGKGVRYADEQVRR. The interval 151–176 is disordered; sequence RPPEPYKGKGVRYADEQVRRKEAKKK.

Belongs to the universal ribosomal protein uL6 family. Part of the 50S ribosomal subunit.

Its function is as follows. This protein binds to the 23S rRNA, and is important in its secondary structure. It is located near the subunit interface in the base of the L7/L12 stalk, and near the tRNA binding site of the peptidyltransferase center. This Shewanella loihica (strain ATCC BAA-1088 / PV-4) protein is Large ribosomal subunit protein uL6.